Here is a 1368-residue protein sequence, read N- to C-terminus: Alpha-latrotoxin-Lg1a (1368 aa).

The helix H8 is the probable transmembrane region of the tetrameric pore inserted in the target cell membrane stretch occupies residues 217–236 (VLYAILYGTQTYVSVMFFLL). A disulfide bond links cysteine 392 and cysteine 1044. 20 ANK repeats span residues 469-500 (QGRT…DINQ), 504-533 (KGYT…SVNS), 538-568 (FLQT…NINE), 572-601 (DGFT…DVNV), 605-635 (KGLT…DINA), 639-669 (NNMT…NANA), 674-704 (GLLS…NYNL), 708-737 (GDIT…NINQ), 741-770 (EKYT…NLEA), 774-803 (TGAT…NWRE), 807-837 (NGQM…VLDI), 841-870 (NLDT…KVNT), 874-903 (KGQA…NVYI), 907-936 (DGLN…KFEW), 953-981 (ISHF…GHYS), 982-1011 (ICSP…SVDG), 1013-1042 (KPDT…KVNH), 1046-1075 (NGMT…DFRR), 1079-1109 (LDAT…NINI), and 1115-1144 (NKET…DENI). The tract at residues 1174–1177 (KFRR) is furin-like endopeptidase recognition region. Residues 1178 to 1368 (EYKSSNGEHD…GETLHLFHES (191 aa)) constitute a propeptide that is removed on maturation.

The protein belongs to the cationic peptide 01 (latrotoxin) family. 03 (alpha-latrotoxin) subfamily. Homotetramer in membranes. In terms of tissue distribution, expressed in venom gland, cephalothorax, and abdomen tissues from both males and females.

Its subcellular location is the secreted. It localises to the target cell membrane. Functionally, presynaptic neurotoxin that causes massive release of neurotransmitters from vertebrate (but not invertebrate) nerve terminals and endocrine cells via a complex mechanism involving activation of receptor(s) and toxin insertion into the plasma membrane with subsequent pore formation. Binds to neurexin-1-alpha (NRXN1) in a calcium dependent manner, adhesion G protein-coupled receptor L1 (ADGRL1, also termed latrophilin-1 and calcium-independent receptor of latrotoxin (CIRL)), and receptor-type tyrosine-protein phosphatase S (PTPRS), also termed PTP sigma. NRXN1 and PTPRS are suggested to provide a platform for binding and subsequent pore formation events. In contrast, binding to ADGRL1 does not involve oligomerization and channel formation, but direct downstream stimulation of the synaptic fusion machinery. This Latrodectus geometricus (Brown widow spider) protein is Alpha-latrotoxin-Lg1a.